Reading from the N-terminus, the 196-residue chain is UMP-CMP kinase (196 aa).

Position 13-18 (13-18 (GAGKGT)) interacts with ATP. S33 is modified (phosphoserine). An NMP region spans residues 33–63 (SAGELLRDERKNPDSQYGELIEKYIKEGKIV). R39 contacts a ribonucleoside 5'-phosphate. An N6-acetyllysine mark is found at K43 and K55. Position 61–63 (61–63 (KIV)) interacts with a ribonucleoside 5'-phosphate. Residue K73 forms a Glycyl lysine isopeptide (Lys-Gly) (interchain with G-Cter in SUMO2) linkage. 93–96 (GFPR) provides a ligand contact to a ribonucleoside 5'-phosphate. N100 provides a ligand contact to CMP. K106 is modified (N6-succinyllysine). Residues 133-143 (ERGKSSGRSDD) form an LID region. R134 is an ATP binding site. A ribonucleoside 5'-phosphate contacts are provided by R140 and R151. K179 is a binding site for ATP. S180 bears the Phosphoserine mark.

The protein belongs to the adenylate kinase family. UMP-CMP kinase subfamily. Monomer. Mg(2+) is required as a cofactor. In terms of tissue distribution, ubiquitously expressed.

The protein localises to the nucleus. Its subcellular location is the cytoplasm. The catalysed reaction is CMP + ATP = CDP + ADP. The enzyme catalyses dCMP + ATP = dCDP + ADP. It carries out the reaction UMP + ATP = UDP + ADP. It catalyses the reaction a 2'-deoxyribonucleoside 5'-diphosphate + ATP = a 2'-deoxyribonucleoside 5'-triphosphate + ADP. The catalysed reaction is a ribonucleoside 5'-diphosphate + ATP = a ribonucleoside 5'-triphosphate + ADP. Its function is as follows. Catalyzes the phosphorylation of pyrimidine nucleoside monophosphates at the expense of ATP. Plays an important role in de novo pyrimidine nucleotide biosynthesis. Has preference for UMP and CMP as phosphate acceptors. Also displays broad nucleoside diphosphate kinase activity. The sequence is that of UMP-CMP kinase from Homo sapiens (Human).